Here is a 177-residue protein sequence, read N- to C-terminus: Crossover junction endodeoxyribonuclease RuvC (177 aa).

Active-site residues include D8, E72, and D144. Positions 8, 72, and 144 each coordinate Mg(2+).

It belongs to the RuvC family. As to quaternary structure, homodimer which binds Holliday junction (HJ) DNA. The HJ becomes 2-fold symmetrical on binding to RuvC with unstacked arms; it has a different conformation from HJ DNA in complex with RuvA. In the full resolvosome a probable DNA-RuvA(4)-RuvB(12)-RuvC(2) complex forms which resolves the HJ. Requires Mg(2+) as cofactor.

It localises to the cytoplasm. The catalysed reaction is Endonucleolytic cleavage at a junction such as a reciprocal single-stranded crossover between two homologous DNA duplexes (Holliday junction).. Functionally, the RuvA-RuvB-RuvC complex processes Holliday junction (HJ) DNA during genetic recombination and DNA repair. Endonuclease that resolves HJ intermediates. Cleaves cruciform DNA by making single-stranded nicks across the HJ at symmetrical positions within the homologous arms, yielding a 5'-phosphate and a 3'-hydroxyl group; requires a central core of homology in the junction. The consensus cleavage sequence is 5'-(A/T)TT(C/G)-3'. Cleavage occurs on the 3'-side of the TT dinucleotide at the point of strand exchange. HJ branch migration catalyzed by RuvA-RuvB allows RuvC to scan DNA until it finds its consensus sequence, where it cleaves and resolves the cruciform DNA. This chain is Crossover junction endodeoxyribonuclease RuvC, found in Teredinibacter turnerae (strain ATCC 39867 / T7901).